Consider the following 119-residue polypeptide: Small ribosomal subunit protein uS10 (119 aa).

Residue Ala2 is modified to N-acetylalanine. A Glycyl lysine isopeptide (Lys-Gly) (interchain with G-Cter in ubiquitin) cross-link involves residue Lys4. At Lys8 the chain carries N6-succinyllysine; alternate. Lys8 is covalently cross-linked (Glycyl lysine isopeptide (Lys-Gly) (interchain with G-Cter in ubiquitin); alternate). Thr9 carries the phosphothreonine modification. N6-acetyllysine occurs at positions 34 and 75. Phosphoserine is present on Ser93.

The protein belongs to the universal ribosomal protein uS10 family. In terms of assembly, component of the 40S small ribosomal subunit. Polyubiquitinated by ZNF598 via 'Lys-63'-linked ubiquitin chains when a ribosome has stalled, initiating the ribosome quality control (RQC) pathway to degrade the potentially detrimental aberrant nascent polypeptide. Deubiquitinated by OTUD3 and USP21, antagonizing ZNF598 activity. Post-translationally, ufmylated by UFL1.

The protein resides in the cytoplasm. Its function is as follows. Component of the small ribosomal subunit. The ribosome is a large ribonucleoprotein complex responsible for the synthesis of proteins in the cell. The sequence is that of Small ribosomal subunit protein uS10 (RPS20) from Sus scrofa (Pig).